Reading from the N-terminus, the 68-residue chain is MGVVLFIFLVLFPLATLQLDPDQPVERYAENKQLLNPDERRGIILHALGQRVCCPPESCTDRCLCCLG.

The signal sequence occupies residues Met-1–Leu-17. Residues Gln-18–Arg-51 constitute a propeptide that is removed on maturation. Intrachain disulfides connect Cys-53–Cys-65, Cys-54–Cys-63, and Cys-59–Cys-66. Residue Leu-67 is modified to Leucine amide.

This sequence belongs to the conotoxin M superfamily. As to expression, expressed by the venom duct.

Its subcellular location is the secreted. The polypeptide is Conotoxin PnMLKM-011 (Conus pennaceus (Feathered cone)).